The primary structure comprises 259 residues: Methanethiol S-methyltransferase 2 (259 aa).

Helical transmembrane passes span 5 to 25, 46 to 66, 88 to 108, 115 to 135, and 182 to 202; these read LAILLYAIVSYAAFTVSFLYA, LGEAILVNLLLMSLFAIQHSV, TYVLLSSLILLLLFWQWRPIP, SGIAAWLLIGVHWLGWLIAFA, and FLLAFWATPAMTAGHLLFALA.

It belongs to the nurim family.

It localises to the membrane. It catalyses the reaction methanethiol + S-adenosyl-L-methionine = dimethyl sulfide + S-adenosyl-L-homocysteine + H(+). Its function is as follows. Catalyzes the methylation of methanethiol (MeSH) to yield dimethylsulphide (DMS). In Bradyrhizobium diazoefficiens (strain JCM 10833 / BCRC 13528 / IAM 13628 / NBRC 14792 / USDA 110), this protein is Methanethiol S-methyltransferase 2.